A 546-amino-acid chain; its full sequence is Chaperonin GroEL (546 aa).

ATP-binding positions include 29–32, lysine 50, 86–90, glycine 412, 476–478, and aspartate 492; these read TMGP, DGTTT, and NAA.

It belongs to the chaperonin (HSP60) family. As to quaternary structure, forms a cylinder of 14 subunits composed of two heptameric rings stacked back-to-back. Interacts with the co-chaperonin GroES.

It localises to the cytoplasm. The catalysed reaction is ATP + H2O + a folded polypeptide = ADP + phosphate + an unfolded polypeptide.. In terms of biological role, together with its co-chaperonin GroES, plays an essential role in assisting protein folding. The GroEL-GroES system forms a nano-cage that allows encapsulation of the non-native substrate proteins and provides a physical environment optimized to promote and accelerate protein folding. May play a protective role against the defense mechanisms generated by the infected macrophages. This Legionella micdadei (Tatlockia micdadei) protein is Chaperonin GroEL.